The sequence spans 612 residues: Bifunctional lycopene cyclase/phytoene synthase (612 aa).

Positions 1–268 (MGWEYAQVHL…IVFGLIACDN (268 aa)) are lycopene beta-cyclase. The next 7 helical transmembrane spans lie at 3–23 (WEYA…LAAV), 31–51 (LDVF…VKGL), 112–130 (LFFF…MILS), 148–168 (IAGQ…VSSG), 171–191 (GMYM…LWSI), 203–223 (NTAL…TFAL), and 246–266 (IEEA…LIAC). The interval 275–612 (TFPEHFPRTK…IRVAWSALNK (338 aa)) is phytoene synthase.

It in the N-terminal section; belongs to the lycopene beta-cyclase family. This sequence in the C-terminal section; belongs to the phytoene/squalene synthase family.

It localises to the membrane. It carries out the reaction all-trans-lycopene = gamma-carotene. The catalysed reaction is gamma-carotene = all-trans-beta-carotene. The enzyme catalyses 2 (2E,6E,10E)-geranylgeranyl diphosphate = 15-cis-phytoene + 2 diphosphate. The protein operates within carotenoid biosynthesis; beta-carotene biosynthesis. Its pathway is carotenoid biosynthesis; phytoene biosynthesis; all-trans-phytoene from geranylgeranyl diphosphate: step 1/1. Bifunctional enzyme; part of the car gene cluster that mediates the biosynthesis of neurosporaxanthin, a carboxylic apocarotenoid acting as an essential protective pigments and leading to orange pigmentation. CarAR catalyzes the first step of the pathway by converting geranylgeranyl diphosphate to phytoene, as well as the later cyclization step that transforms the carB product lycopene into gamma-carotene. CarAR also converts part of gamma-carotene into beta-carotene. Neurosporaxanthin is synthesized from geranyl-geranyl pyrophosphate (GGPP) through several enzymatic activities. Phytoene synthase activity performed by the bifunctional enzyme carAR first produces phytoene from geranyl-geranyl pyrophosphate (GGPP). The phytoene dehydrogenase carB then introduces 4 desaturations to lead to lycopene which is substrate of the carotene cyclase activity of carAR that leads to the production of gamma-carotene. CarB then performs a 5th desaturation reaction to yield torulene. Torulene is the substrate of the dioxidase carT that breaks the molecule, removing five carbon atoms to yield beta-apo-4'-carotenal, whereas the aldehyde dehydrogenase carD mediates the last step by converting beta-apo-4'-carotenal into neurosporaxanthin. The polypeptide is Bifunctional lycopene cyclase/phytoene synthase (Fusarium fujikuroi (Bakanae and foot rot disease fungus)).